The chain runs to 109 residues: ATP-dependent Clp protease adapter protein ClpS (109 aa).

A disordered region spans residues 1–25 (MSERKEGDSGAGVRSAVITQTKPKT).

Belongs to the ClpS family. Binds to the N-terminal domain of the chaperone ClpA.

Its function is as follows. Involved in the modulation of the specificity of the ClpAP-mediated ATP-dependent protein degradation. The protein is ATP-dependent Clp protease adapter protein ClpS of Phenylobacterium zucineum (strain HLK1).